Reading from the N-terminus, the 409-residue chain is Carbamoyl phosphate synthase arginine-specific small chain (409 aa).

Residues 197–389 enclose the Glutamine amidotransferase type-1 domain; that stretch reads NVALIDCGVK…FDNMSQYRAL (193 aa). Cys277 serves as the catalytic Nucleophile. Active-site residues include His362 and Glu364.

The protein belongs to the CarA family. In terms of assembly, heterodimer composed of 2 chains; the small (or glutamine) chain promotes the hydrolysis of glutamine to ammonia, which is used by the large (or ammonia) chain to synthesize carbamoyl phosphate.

It is found in the cytoplasm. The enzyme catalyses hydrogencarbonate + L-glutamine + 2 ATP + H2O = carbamoyl phosphate + L-glutamate + 2 ADP + phosphate + 2 H(+). The catalysed reaction is L-glutamine + H2O = L-glutamate + NH4(+). It participates in amino-acid biosynthesis; L-arginine biosynthesis; carbamoyl phosphate from bicarbonate: step 1/1. In terms of biological role, small subunit of the arginine-specific carbamoyl phosphate synthase (CPSase). CPSase catalyzes the formation of carbamoyl phosphate from the ammonia moiety of glutamine, carbonate, and phosphate donated by ATP, constituting the first step of 2 biosynthetic pathways, one leading to arginine and/or urea and the other to pyrimidine nucleotides. The small subunit (glutamine amidotransferase) binds and cleaves glutamine to supply the large subunit with the substrate ammonia. This chain is Carbamoyl phosphate synthase arginine-specific small chain (CPA1), found in Kluyveromyces lactis (strain ATCC 8585 / CBS 2359 / DSM 70799 / NBRC 1267 / NRRL Y-1140 / WM37) (Yeast).